Consider the following 229-residue polypeptide: Large ribosomal subunit protein uL1 (229 aa).

This sequence belongs to the universal ribosomal protein uL1 family. In terms of assembly, part of the 50S ribosomal subunit.

In terms of biological role, binds directly to 23S rRNA. The L1 stalk is quite mobile in the ribosome, and is involved in E site tRNA release. Its function is as follows. Protein L1 is also a translational repressor protein, it controls the translation of the L11 operon by binding to its mRNA. The sequence is that of Large ribosomal subunit protein uL1 from Latilactobacillus sakei subsp. sakei (strain 23K) (Lactobacillus sakei subsp. sakei).